Consider the following 193-residue polypeptide: Auxin-induced protein 22D (193 aa).

The tract at residues 16-68 (ATELRLGLPGSDEPEKRATARSNKRSSPEASDEESISNGSDVTKEDNVVPPAK) is disordered. The EAR-like (transcriptional repression) signature appears at 19 to 23 (LRLGL). The PB1 domain occupies 97-184 (GMYVKVSMAG…SCKRLRIMKG (88 aa)).

The protein belongs to the Aux/IAA family. As to quaternary structure, homodimers and heterodimers.

It localises to the nucleus. Functionally, aux/IAA proteins are short-lived transcriptional factors that function as repressors of early auxin response genes at low auxin concentrations. Repression is thought to result from the interaction with auxin response factors (ARFs), proteins that bind to the auxin-responsive promoter element (AuxRE). Formation of heterodimers with ARF proteins may alter their ability to modulate early auxin response genes expression. This Vigna radiata var. radiata (Mung bean) protein is Auxin-induced protein 22D (AUX22D).